The sequence spans 499 residues: Glucose-6-phosphate exchanger SLC37A2 (499 aa).

The helical transmembrane segment at 21-40 threads the bilayer; that stretch reads YRGFIIVMTFLFYTCYHLSR. Residues asparagine 53, asparagine 62, and asparagine 66 are each glycosylated (N-linked (GlcNAc...) asparagine). 11 helical membrane-spanning segments follow: residues 86–106, 116–136, 143–163, 187–207, 208–228, 302–322, 334–354, 362–382, 391–411, 434–454, and 458–478; these read GSLD…SGIF, LSGG…GYYW, YYIL…PAVV, AVGN…AWGL, SFIV…FFLV, LCLL…PLYI, GDLS…AGGI, AITC…YNYF, IAML…ITTA, AIID…AGVL, and GWNY…LLLA.

The protein belongs to the major facilitator superfamily. Organophosphate:Pi antiporter (OPA) (TC 2.A.1.4) family.

It is found in the endoplasmic reticulum membrane. It catalyses the reaction D-glucose 6-phosphate(in) + phosphate(out) = D-glucose 6-phosphate(out) + phosphate(in). Inorganic phosphate and glucose-6-phosphate antiporter. May transport cytoplasmic glucose-6-phosphate into the lumen of the endoplasmic reticulum and translocate inorganic phosphate into the opposite direction. This Xenopus laevis (African clawed frog) protein is Glucose-6-phosphate exchanger SLC37A2.